The sequence spans 459 residues: tRNA modification GTPase MnmE (459 aa).

(6S)-5-formyl-5,6,7,8-tetrahydrofolate is bound by residues R20, E85, and R124. The region spanning 221-380 (GLSTVIIGRP…LEEAIQSLFY (160 aa)) is the TrmE-type G domain. Position 231 (N231) interacts with K(+). Residues 231–236 (NVGKSS), 250–256 (TDIPGTT), and 275–278 (DTAG) contribute to the GTP site. Residue S235 participates in Mg(2+) binding. Residues T250, I252, and T255 each coordinate K(+). T256 is a Mg(2+) binding site. A (6S)-5-formyl-5,6,7,8-tetrahydrofolate-binding site is contributed by K459.

The protein belongs to the TRAFAC class TrmE-Era-EngA-EngB-Septin-like GTPase superfamily. TrmE GTPase family. As to quaternary structure, homodimer. Heterotetramer of two MnmE and two MnmG subunits. The cofactor is K(+).

Its subcellular location is the cytoplasm. Functionally, exhibits a very high intrinsic GTPase hydrolysis rate. Involved in the addition of a carboxymethylaminomethyl (cmnm) group at the wobble position (U34) of certain tRNAs, forming tRNA-cmnm(5)s(2)U34. The chain is tRNA modification GTPase MnmE from Bacillus subtilis (strain 168).